Here is a 103-residue protein sequence, read N- to C-terminus: Small ribosomal subunit protein uS10 (103 aa).

The protein belongs to the universal ribosomal protein uS10 family. As to quaternary structure, part of the 30S ribosomal subunit.

Functionally, involved in the binding of tRNA to the ribosomes. This is Small ribosomal subunit protein uS10 from Cutibacterium acnes (strain DSM 16379 / KPA171202) (Propionibacterium acnes).